We begin with the raw amino-acid sequence, 147 residues long: Putative pre-16S rRNA nuclease (147 aa).

The protein belongs to the YqgF nuclease family.

Its subcellular location is the cytoplasm. Functionally, could be a nuclease involved in processing of the 5'-end of pre-16S rRNA. In Ureaplasma parvum serovar 3 (strain ATCC 27815 / 27 / NCTC 11736), this protein is Putative pre-16S rRNA nuclease.